We begin with the raw amino-acid sequence, 137 residues long: uncharacterized protein (137 aa).

This is an uncharacterized protein from Archaeoglobus fulgidus (strain ATCC 49558 / DSM 4304 / JCM 9628 / NBRC 100126 / VC-16).